The chain runs to 240 residues: Short palate, lung and nasal epithelium carcinoma-associated protein 2B (240 aa).

An N-terminal signal peptide occupies residues 1–19 (MVQLWKLVLLCGLLAGTSA). An intrachain disulfide couples Cys-163 to Cys-206.

The protein belongs to the BPI/LBP/Plunc superfamily. Plunc family. As to expression, parotid glands.

It is found in the secreted. This Bos taurus (Bovine) protein is Short palate, lung and nasal epithelium carcinoma-associated protein 2B (SPLUNC2B).